Here is a 486-residue protein sequence, read N- to C-terminus: Arrestin-related trafficking adapter 10 (486 aa).

It belongs to the ART10 family.

The protein resides in the cytoplasm. May regulate endocytosis by recruiting RSP5 ubiquitin ligase activity to specific plasma membrane proteins in response to extracellular stimuli. The protein is Arrestin-related trafficking adapter 10 (ART10) of Zygosaccharomyces rouxii (strain ATCC 2623 / CBS 732 / NBRC 1130 / NCYC 568 / NRRL Y-229).